A 198-amino-acid polypeptide reads, in one-letter code: Recombination protein RecR (198 aa).

The segment at 57–72 (CSVCCNLTDQDPCQIC) adopts a C4-type zinc-finger fold. In terms of domain architecture, Toprim spans 80–175 (STICVVQEPR…KVTRIARGLP (96 aa)).

Belongs to the RecR family.

In terms of biological role, may play a role in DNA repair. It seems to be involved in an RecBC-independent recombinational process of DNA repair. It may act with RecF and RecO. The chain is Recombination protein RecR from Symbiobacterium thermophilum (strain DSM 24528 / JCM 14929 / IAM 14863 / T).